An 84-amino-acid polypeptide reads, in one-letter code: MAKSTKRRPAPEKPAKARKCVFCAKKNQQIDYKDTTLLRTYISERGKIRARRVTGNCVQHQRDIAIAVKNAREVALLPFTSSAR.

This sequence belongs to the bacterial ribosomal protein bS18 family. Part of the 30S ribosomal subunit. Forms a tight heterodimer with protein bS6.

Functionally, binds as a heterodimer with protein bS6 to the central domain of the 16S rRNA, where it helps stabilize the platform of the 30S subunit. In Mycobacterium leprae (strain Br4923), this protein is Small ribosomal subunit protein bS18.